A 442-amino-acid chain; its full sequence is MQKTIPMTAYKSTRLSGIIKIPGDKSISHRSLILGGLASGETHIHGILESDDVFNTAAAMQALGACIIKKDDLWIIRGTGNGCLLAAQKPLDFGNAGTGARLVMGMVGPYHMKTTFIGDASLSKRPMARILDPLQLMGVEIEATHGNYLPLTLYGPKMTNPICYRIPVASAQVKSAILLAGLNTAGTTTVIEPILTRDHTEKMLKAFGAKLEIEKNAEGTRFIHLNGHPHLTGQTIHIPGDPSSAAFPIVAALLIEDSDITIENVLINNSRMGLIETLWEMGAQIELLNQRQTGGEDVANLRVKSSVLKGVTVPKERAPSMIDEYPALAVAAAFAEGKTVMLGIEELRVKESDRLSVLAQGLKINHVDCEEGQDFLIVHGKGSAKGLGGGHVTTHLDHRIAMSFLIFGLVSEKPVTIDDKRMIATSFPEFIPFIQQLGGKIS.

Residues lysine 25, serine 26, and arginine 30 each coordinate 3-phosphoshikimate. Lysine 25 is a phosphoenolpyruvate binding site. Residues glycine 97 and arginine 125 each contribute to the phosphoenolpyruvate site. Residues serine 170, glutamine 172, aspartate 323, and lysine 350 each coordinate 3-phosphoshikimate. Glutamine 172 is a binding site for phosphoenolpyruvate. Aspartate 323 (proton acceptor) is an active-site residue. Residues arginine 354 and arginine 399 each contribute to the phosphoenolpyruvate site.

This sequence belongs to the EPSP synthase family. In terms of assembly, monomer.

It is found in the cytoplasm. The catalysed reaction is 3-phosphoshikimate + phosphoenolpyruvate = 5-O-(1-carboxyvinyl)-3-phosphoshikimate + phosphate. It participates in metabolic intermediate biosynthesis; chorismate biosynthesis; chorismate from D-erythrose 4-phosphate and phosphoenolpyruvate: step 6/7. Functionally, catalyzes the transfer of the enolpyruvyl moiety of phosphoenolpyruvate (PEP) to the 5-hydroxyl of shikimate-3-phosphate (S3P) to produce enolpyruvyl shikimate-3-phosphate and inorganic phosphate. The protein is 3-phosphoshikimate 1-carboxyvinyltransferase of Bartonella henselae (strain ATCC 49882 / DSM 28221 / CCUG 30454 / Houston 1) (Rochalimaea henselae).